The following is a 356-amino-acid chain: Nicotinate-nucleotide--dimethylbenzimidazole phosphoribosyltransferase (356 aa).

Glu-317 (proton acceptor) is an active-site residue.

This sequence belongs to the CobT family. In terms of assembly, homodimer.

The enzyme catalyses 5,6-dimethylbenzimidazole + nicotinate beta-D-ribonucleotide = alpha-ribazole 5'-phosphate + nicotinate + H(+). The protein operates within nucleoside biosynthesis; alpha-ribazole biosynthesis; alpha-ribazole from 5,6-dimethylbenzimidazole: step 1/2. Catalyzes the synthesis of alpha-ribazole-5'-phosphate from nicotinate mononucleotide (NAMN) and 5,6-dimethylbenzimidazole (DMB). In Salmonella schwarzengrund (strain CVM19633), this protein is Nicotinate-nucleotide--dimethylbenzimidazole phosphoribosyltransferase.